The chain runs to 424 residues: Serine--tRNA ligase 1 (424 aa).

232–234 (TAE) lines the L-serine pocket. 263–265 (RSE) lines the ATP pocket. Residue Glu-286 coordinates L-serine. ATP is bound at residue 350 to 353 (EISS). Ser-386 provides a ligand contact to L-serine.

Belongs to the class-II aminoacyl-tRNA synthetase family. Type-1 seryl-tRNA synthetase subfamily. In terms of assembly, homodimer. The tRNA molecule binds across the dimer.

The protein resides in the cytoplasm. It carries out the reaction tRNA(Ser) + L-serine + ATP = L-seryl-tRNA(Ser) + AMP + diphosphate + H(+). The enzyme catalyses tRNA(Sec) + L-serine + ATP = L-seryl-tRNA(Sec) + AMP + diphosphate + H(+). It participates in aminoacyl-tRNA biosynthesis; selenocysteinyl-tRNA(Sec) biosynthesis; L-seryl-tRNA(Sec) from L-serine and tRNA(Sec): step 1/1. Functionally, catalyzes the attachment of serine to tRNA(Ser). Is also able to aminoacylate tRNA(Sec) with serine, to form the misacylated tRNA L-seryl-tRNA(Sec), which will be further converted into selenocysteinyl-tRNA(Sec). The chain is Serine--tRNA ligase 1 from Clostridium acetobutylicum (strain ATCC 824 / DSM 792 / JCM 1419 / IAM 19013 / LMG 5710 / NBRC 13948 / NRRL B-527 / VKM B-1787 / 2291 / W).